The primary structure comprises 207 residues: Protein dct-5 (207 aa).

Residues 13-33 (LNFILSIMNSYLFVLIVSIGF) traverse the membrane as a helical segment.

It localises to the membrane. Its function is as follows. Acts downstream of daf-16/foxo to suppress tumors induced by disruption of gld-1. Potentially a direct target of daf-15/foxo. In Caenorhabditis elegans, this protein is Protein dct-5 (dct-5).